The primary structure comprises 499 residues: Endoglucanase 3 (499 aa).

The signal sequence occupies residues 1–19 (MALLRCLFLLAVLLPHRNA). D88 serves as the catalytic Nucleophile. Residues H416, D467, and E476 contribute to the active site.

Belongs to the glycosyl hydrolase 9 (cellulase E) family. Expressed in flowers.

It is found in the secreted. It catalyses the reaction Endohydrolysis of (1-&gt;4)-beta-D-glucosidic linkages in cellulose, lichenin and cereal beta-D-glucans.. This chain is Endoglucanase 3 (GLU8), found in Oryza sativa subsp. japonica (Rice).